We begin with the raw amino-acid sequence, 154 residues long: 6,7-dimethyl-8-ribityllumazine synthase (154 aa).

Residues F15, 47 to 49 (TFD), and 71 to 73 (AVI) contribute to the 5-amino-6-(D-ribitylamino)uracil site. 76–77 (ET) provides a ligand contact to (2S)-2-hydroxy-3-oxobutyl phosphate. Residue H79 is the Proton donor of the active site. L104 is a binding site for 5-amino-6-(D-ribitylamino)uracil. R119 contacts (2S)-2-hydroxy-3-oxobutyl phosphate.

It belongs to the DMRL synthase family.

The enzyme catalyses (2S)-2-hydroxy-3-oxobutyl phosphate + 5-amino-6-(D-ribitylamino)uracil = 6,7-dimethyl-8-(1-D-ribityl)lumazine + phosphate + 2 H2O + H(+). It functions in the pathway cofactor biosynthesis; riboflavin biosynthesis; riboflavin from 2-hydroxy-3-oxobutyl phosphate and 5-amino-6-(D-ribitylamino)uracil: step 1/2. Catalyzes the formation of 6,7-dimethyl-8-ribityllumazine by condensation of 5-amino-6-(D-ribitylamino)uracil with 3,4-dihydroxy-2-butanone 4-phosphate. This is the penultimate step in the biosynthesis of riboflavin. The polypeptide is 6,7-dimethyl-8-ribityllumazine synthase (Saccharolobus islandicus (strain L.S.2.15 / Lassen #1) (Sulfolobus islandicus)).